The sequence spans 74 residues: Putative protein YozX (74 aa).

This is Putative protein YozX (yozX) from Bacillus subtilis (strain 168).